The following is a 493-amino-acid chain: Probable cytosol aminopeptidase (493 aa).

Mn(2+)-binding residues include lysine 257 and aspartate 262. Lysine 269 is a catalytic residue. Mn(2+)-binding residues include aspartate 281, aspartate 341, and glutamate 343. The active site involves arginine 345.

It belongs to the peptidase M17 family. Requires Mn(2+) as cofactor.

Its subcellular location is the cytoplasm. The catalysed reaction is Release of an N-terminal amino acid, Xaa-|-Yaa-, in which Xaa is preferably Leu, but may be other amino acids including Pro although not Arg or Lys, and Yaa may be Pro. Amino acid amides and methyl esters are also readily hydrolyzed, but rates on arylamides are exceedingly low.. The enzyme catalyses Release of an N-terminal amino acid, preferentially leucine, but not glutamic or aspartic acids.. Functionally, presumably involved in the processing and regular turnover of intracellular proteins. Catalyzes the removal of unsubstituted N-terminal amino acids from various peptides. The polypeptide is Probable cytosol aminopeptidase (Synechococcus sp. (strain WH7803)).